Reading from the N-terminus, the 198-residue chain is Imidazoleglycerol-phosphate dehydratase (198 aa).

Belongs to the imidazoleglycerol-phosphate dehydratase family.

Its subcellular location is the cytoplasm. It catalyses the reaction D-erythro-1-(imidazol-4-yl)glycerol 3-phosphate = 3-(imidazol-4-yl)-2-oxopropyl phosphate + H2O. It functions in the pathway amino-acid biosynthesis; L-histidine biosynthesis; L-histidine from 5-phospho-alpha-D-ribose 1-diphosphate: step 6/9. The protein is Imidazoleglycerol-phosphate dehydratase of Herminiimonas arsenicoxydans.